The following is a 458-amino-acid chain: MSLFRSRQAKIHFVGVGGIGMSGIAEVLLNLGYTVSGSDLRESETTRRLAGLGGRISYGHAAENVLQVDVVVISSAVKRDNPEVLEARRRKIPVIPRAEMLAELMRLKYGVAIAGSHGKTTTTSMAAHLLAHAGLDPTAVVGGKVNAFGSNAKLGKGDYMVVEADESDGSFLRIPPTIAIVTNIDPEHLDHWKTPDALRRGFVDFVNRVPFYGLAILCIDHPTVQSILPDVEKRAVTYGESHQADYRAEAIELSGHAVRFDAFRRDEALGRFEVAMVGRHNALNALAVIALGDEMGIPPLVTREALRSFQGVQRRFTVRGEAAGVTVVDDYGHHPAEVKATLQGAREAFKRRVVCLFQPHRYTRTRDLMAEFATAFNDADVLLLTDIYAAGEEPIPGATAANLADAIRAWGHRDVTLVPRAELARAARERVRPGDLVLTLGAGDVTAAGPELLALLER.

Residue 115–121 (GSHGKTT) participates in ATP binding.

This sequence belongs to the MurCDEF family.

The protein localises to the cytoplasm. The enzyme catalyses UDP-N-acetyl-alpha-D-muramate + L-alanine + ATP = UDP-N-acetyl-alpha-D-muramoyl-L-alanine + ADP + phosphate + H(+). The protein operates within cell wall biogenesis; peptidoglycan biosynthesis. Its function is as follows. Cell wall formation. This is UDP-N-acetylmuramate--L-alanine ligase from Anaeromyxobacter dehalogenans (strain 2CP-1 / ATCC BAA-258).